Here is an 863-residue protein sequence, read N- to C-terminus: DNA gyrase subunit A (863 aa).

Residues Leu-37–Leu-500 form the Topo IIA-type catalytic domain. Tyr-125 functions as the O-(5'-phospho-DNA)-tyrosine intermediate in the catalytic mechanism. Residues Gln-527–Gly-533 carry the GyrA-box motif.

Belongs to the type II topoisomerase GyrA/ParC subunit family. As to quaternary structure, heterotetramer, composed of two GyrA and two GyrB chains. In the heterotetramer, GyrA contains the active site tyrosine that forms a transient covalent intermediate with DNA, while GyrB binds cofactors and catalyzes ATP hydrolysis.

Its subcellular location is the cytoplasm. It catalyses the reaction ATP-dependent breakage, passage and rejoining of double-stranded DNA.. A type II topoisomerase that negatively supercoils closed circular double-stranded (ds) DNA in an ATP-dependent manner to modulate DNA topology and maintain chromosomes in an underwound state. Negative supercoiling favors strand separation, and DNA replication, transcription, recombination and repair, all of which involve strand separation. Also able to catalyze the interconversion of other topological isomers of dsDNA rings, including catenanes and knotted rings. Type II topoisomerases break and join 2 DNA strands simultaneously in an ATP-dependent manner. The sequence is that of DNA gyrase subunit A from Campylobacter jejuni subsp. jejuni serotype O:2 (strain ATCC 700819 / NCTC 11168).